Reading from the N-terminus, the 164-residue chain is Crossover junction endodeoxyribonuclease RuvC (164 aa).

Catalysis depends on residues Asp-7, Glu-67, and Asp-139. Mg(2+) contacts are provided by Asp-7, Glu-67, and Asp-139.

This sequence belongs to the RuvC family. In terms of assembly, homodimer which binds Holliday junction (HJ) DNA. The HJ becomes 2-fold symmetrical on binding to RuvC with unstacked arms; it has a different conformation from HJ DNA in complex with RuvA. In the full resolvosome a probable DNA-RuvA(4)-RuvB(12)-RuvC(2) complex forms which resolves the HJ. Requires Mg(2+) as cofactor.

Its subcellular location is the cytoplasm. It carries out the reaction Endonucleolytic cleavage at a junction such as a reciprocal single-stranded crossover between two homologous DNA duplexes (Holliday junction).. The RuvA-RuvB-RuvC complex processes Holliday junction (HJ) DNA during genetic recombination and DNA repair. Endonuclease that resolves HJ intermediates. Cleaves cruciform DNA by making single-stranded nicks across the HJ at symmetrical positions within the homologous arms, yielding a 5'-phosphate and a 3'-hydroxyl group; requires a central core of homology in the junction. The consensus cleavage sequence is 5'-(A/T)TT(C/G)-3'. Cleavage occurs on the 3'-side of the TT dinucleotide at the point of strand exchange. HJ branch migration catalyzed by RuvA-RuvB allows RuvC to scan DNA until it finds its consensus sequence, where it cleaves and resolves the cruciform DNA. The sequence is that of Crossover junction endodeoxyribonuclease RuvC from Geobacter sp. (strain M21).